We begin with the raw amino-acid sequence, 305 residues long: UDP-3-O-acyl-N-acetylglucosamine deacetylase (305 aa).

Residues H79, H238, and D242 each contribute to the Zn(2+) site. H265 (proton donor) is an active-site residue.

It belongs to the LpxC family. The cofactor is Zn(2+).

It catalyses the reaction a UDP-3-O-[(3R)-3-hydroxyacyl]-N-acetyl-alpha-D-glucosamine + H2O = a UDP-3-O-[(3R)-3-hydroxyacyl]-alpha-D-glucosamine + acetate. Its pathway is glycolipid biosynthesis; lipid IV(A) biosynthesis; lipid IV(A) from (3R)-3-hydroxytetradecanoyl-[acyl-carrier-protein] and UDP-N-acetyl-alpha-D-glucosamine: step 2/6. Functionally, catalyzes the hydrolysis of UDP-3-O-myristoyl-N-acetylglucosamine to form UDP-3-O-myristoylglucosamine and acetate, the committed step in lipid A biosynthesis. The polypeptide is UDP-3-O-acyl-N-acetylglucosamine deacetylase (Cronobacter sakazakii (strain ATCC BAA-894) (Enterobacter sakazakii)).